The sequence spans 146 residues: Putative pre-16S rRNA nuclease (146 aa).

It belongs to the YqgF nuclease family.

The protein localises to the cytoplasm. Its function is as follows. Could be a nuclease involved in processing of the 5'-end of pre-16S rRNA. The protein is Putative pre-16S rRNA nuclease of Burkholderia thailandensis (strain ATCC 700388 / DSM 13276 / CCUG 48851 / CIP 106301 / E264).